The following is a 263-amino-acid chain: Small ribosomal subunit protein eS1 (263 aa).

The disordered stretch occupies residues 235–263 (HGEGGGGKGEAGDKSERPEGYEPPVQESV). Over residues 244-254 (EAGDKSERPEG) the composition is skewed to basic and acidic residues.

Belongs to the eukaryotic ribosomal protein eS1 family. In terms of assembly, component of the small ribosomal subunit. Mature ribosomes consist of a small (40S) and a large (60S) subunit. The 40S subunit contains about 33 different proteins and 1 molecule of RNA (18S). The 60S subunit contains about 49 different proteins and 3 molecules of RNA (28S, 5.8S and 5S).

The protein resides in the cytoplasm. The chain is Small ribosomal subunit protein eS1 from Bombyx mori (Silk moth).